A 182-amino-acid chain; its full sequence is LIM domain-containing protein C (182 aa).

LIM zinc-binding domains lie at 3 to 63 and 110 to 170; these read SICP…LFRQ and TNCP…KFGP.

The protein resides in the cell projection. Its subcellular location is the pseudopodium. It localises to the cytoplasm. It is found in the cell cortex. The protein localises to the cytoskeleton. Functionally, binds to F-actin and may modulate the chemotactic response during early development and contribute to the maintenance of the strength of the actin cytoskeleton. The polypeptide is LIM domain-containing protein C (limC) (Dictyostelium discoideum (Social amoeba)).